We begin with the raw amino-acid sequence, 432 residues long: Trigger factor (432 aa).

In terms of domain architecture, PPIase FKBP-type spans 161-246 (EDRVTIDFTG…LKKVEERELP (86 aa)).

This sequence belongs to the FKBP-type PPIase family. Tig subfamily. As to quaternary structure, homodimer and monomer. In vivo most of the ribosomes are in complex with monomeric TF. Uncomplexed TF, however, is in a monomer-dimer equilibrium with approximately two thirds of TF existing in a dimeric state.

Its subcellular location is the cytoplasm. It catalyses the reaction [protein]-peptidylproline (omega=180) = [protein]-peptidylproline (omega=0). In terms of biological role, involved in protein export. Acts as a chaperone by maintaining the newly synthesized protein in an open conformation. Functions as a peptidyl-prolyl cis-trans isomerase. The chain is Trigger factor from Escherichia coli O139:H28 (strain E24377A / ETEC).